The chain runs to 177 residues: Adenine phosphoribosyltransferase (177 aa).

Belongs to the purine/pyrimidine phosphoribosyltransferase family. In terms of assembly, homodimer.

The protein resides in the cytoplasm. The enzyme catalyses AMP + diphosphate = 5-phospho-alpha-D-ribose 1-diphosphate + adenine. It participates in purine metabolism; AMP biosynthesis via salvage pathway; AMP from adenine: step 1/1. Its function is as follows. Catalyzes a salvage reaction resulting in the formation of AMP, that is energically less costly than de novo synthesis. This chain is Adenine phosphoribosyltransferase, found in Idiomarina loihiensis (strain ATCC BAA-735 / DSM 15497 / L2-TR).